The primary structure comprises 894 residues: Phosphoenolpyruvate carboxylase (894 aa).

Active-site residues include H143 and K556.

This sequence belongs to the PEPCase type 1 family. Mg(2+) serves as cofactor.

The enzyme catalyses oxaloacetate + phosphate = phosphoenolpyruvate + hydrogencarbonate. In terms of biological role, forms oxaloacetate, a four-carbon dicarboxylic acid source for the tricarboxylic acid cycle. This is Phosphoenolpyruvate carboxylase from Acinetobacter baumannii (strain ATCC 17978 / DSM 105126 / CIP 53.77 / LMG 1025 / NCDC KC755 / 5377).